The following is a 20-amino-acid chain: 44 kDa cell wall protein 2 (20 aa).

It is found in the secreted. The protein localises to the cell wall. The polypeptide is 44 kDa cell wall protein 2 (Solanum lycopersicum (Tomato)).